We begin with the raw amino-acid sequence, 273 residues long: Eukaryotic translation initiation factor 3 subunit G-2 (273 aa).

Residues 193–271 (SAVRISNLSE…LILCVEWSKP (79 aa)) form the RRM domain.

The protein belongs to the eIF-3 subunit G family. In terms of assembly, component of the eukaryotic translation initiation factor 3 (eIF-3) complex. The eIF-3 complex interacts with pix.

Its subcellular location is the cytoplasm. In terms of biological role, RNA-binding component of the eukaryotic translation initiation factor 3 (eIF-3) complex, which is involved in protein synthesis of a specialized repertoire of mRNAs and, together with other initiation factors, stimulates binding of mRNA and methionyl-tRNAi to the 40S ribosome. The eIF-3 complex specifically targets and initiates translation of a subset of mRNAs involved in cell proliferation. This subunit can bind 18S rRNA. This is Eukaryotic translation initiation factor 3 subunit G-2 from Drosophila melanogaster (Fruit fly).